The sequence spans 698 residues: Serine/alanine racemase (698 aa).

The Cytoplasmic portion of the chain corresponds to 1 to 10 (MKNKGIDQFR). The helical transmembrane segment at 11 to 31 (VIAAMMVVAIHCLPLHYLWPE) threads the bilayer. Residues 32 to 42 (GDILITLTIFR) are Extracellular-facing. A helical transmembrane segment spans residues 43–63 (VAVPFFFMISGYYVFAELAVA). The Cytoplasmic portion of the chain corresponds to 64 to 81 (NSYPSRQRVFNFIKKQLK). The chain crosses the membrane as a helical span at residues 82 to 102 (VYLLATLMFLPLALYSQTIGF). Residues 103-121 (DLPVGTLVQVLLVNGILYH) are Extracellular-facing. A helical membrane pass occupies residues 122-142 (LWYFPALITGSLLLTSLLIHV). Residues 143-147 (SFKKV) lie on the Cytoplasmic side of the membrane. The helical transmembrane segment at 148 to 168 (FWLAAGLYLIGLGGDSWFGLI) threads the bilayer. The Extracellular segment spans residues 169 to 183 (QQTPIEPFYTAVFHL). Residues 184-204 (LDGTRNGIFFTPLFLCLGVLV) traverse the membrane as a helical segment. Residues 205 to 216 (RKQSEKRSLSKT) lie on the Cytoplasmic side of the membrane. The chain crosses the membrane as a helical span at residues 217–237 (ALFFLISLIGLLIESAYLHGF). Topologically, residues 238–244 (SIPKHDS) are extracellular. Residues 245 to 265 (MYLFLPVVLFFLFPLILRWHP) form a helical membrane-spanning segment. Topologically, residues 266–274 (HRTWKHPGQ) are cytoplasmic. A helical membrane pass occupies residues 275 to 295 (LSLWLYLLHPYTIAGTHFLSQ). The Extracellular portion of the chain corresponds to 296–301 (KISILQ). Residues 302 to 322 (NNLINYLVVLILTIGFICLFL) traverse the membrane as a helical segment. The Cytoplasmic portion of the chain corresponds to 323 to 698 (RQKHSWFRHK…IGPRVSARIK (376 aa)). Positions 332 to 698 (KQTTPVKRAV…IGPRVSARIK (367 aa)) are racemase. Lysine 371 serves as the catalytic Proton acceptor. Lysine 371 carries the N6-(pyridoxal phosphate)lysine modification. Residue arginine 465 participates in substrate binding. Tyrosine 597 acts as the Proton acceptor in catalysis. A substrate-binding site is contributed by methionine 646.

In the N-terminal section; belongs to the acyltransferase 3 family. The protein in the C-terminal section; belongs to the alanine racemase family. As to quaternary structure, homodimer. Requires pyridoxal 5'-phosphate as cofactor.

It is found in the cell membrane. It carries out the reaction L-alanine = D-alanine. The catalysed reaction is L-serine = D-serine. It participates in amino-acid biosynthesis; D-alanine biosynthesis; D-alanine from L-alanine: step 1/1. Functionally, catalyzes the interconversion of L-serine and D-serine, and L-alanine and D-alanine. L-alanine is racemized at a rate that is 14% of that of L-serine. Together with VanC/VanC1 and VanXYC, required for vancomycin resistance in E.gallinarum strain BM4174. This chain is Serine/alanine racemase, found in Enterococcus gallinarum.